The chain runs to 149 residues: Detocs response regulatory protein DtcB (149 aa).

The Response regulatory domain maps to 1–134; that stretch reads MILIVEDDAH…DIEACYYDHN (134 aa). Asp-53 is subject to 4-aspartylphosphate.

In terms of processing, probably phosphorylated by DtcA.

Its function is as follows. Possible phosphate scavenger member of the two-component regulatory system Detocs that confers resistance to bacteriophage. When the system (DtcA-DtcB-DtcC) is expressed in a susceptible E.coli (strain MG1655) it confers resistance to bacteriophages T2, T4, T5, T6 and SECphi27. Detocs inhibits T5 infection leading to growth arrest but not complete cell lysis, during SECphi27 infection leads to cell lysis. Overexpression of this protein along with the intact Detocs locus cancels T5 immunity; when the phosphate-receiving Asp-53 is mutated to Ala in this protein, immunity is restored. DtcA probably autophosphorylates upon sensing viral infection, and subsequently transfers the phosphate signal to DtcC which activates it, leading to an antiviral defense; DtcB (this subunit) may scavenge phosphorylation signals from accidental activation of DtcA. The chain is Detocs response regulatory protein DtcB from Vibrio alginolyticus.